Consider the following 334-residue polypeptide: Formamidase (334 aa).

The 247-residue stretch at 14 to 260 folds into the CN hydrolase domain; sequence FLVAAIQFPV…WEIVTGEIYP (247 aa). Glu60 (proton acceptor) is an active-site residue. Catalysis depends on Lys133, which acts as the Proton donor. The active-site Nucleophile is the Cys166.

This sequence belongs to the carbon-nitrogen hydrolase superfamily. Aliphatic amidase family.

The catalysed reaction is formamide + H2O = formate + NH4(+). Functionally, is an aliphatic amidase with a restricted substrate specificity, as it only hydrolyzes formamide. This Helicobacter pylori (strain G27) protein is Formamidase.